A 118-amino-acid chain; its full sequence is Basic phospholipase A2 PA-12A (118 aa).

Cystine bridges form between Cys-11-Cys-71, Cys-27-Cys-117, Cys-29-Cys-45, Cys-44-Cys-98, Cys-51-Cys-91, Cys-60-Cys-84, and Cys-78-Cys-89. Ca(2+) contacts are provided by Tyr-28, Gly-30, and Gly-32. Residue His-48 is part of the active site. Asp-49 contacts Ca(2+). Residue Asp-92 is part of the active site.

The protein belongs to the phospholipase A2 family. Group I subfamily. D49 sub-subfamily. Ca(2+) is required as a cofactor. Expressed by the venom gland.

Its subcellular location is the secreted. The enzyme catalyses a 1,2-diacyl-sn-glycero-3-phosphocholine + H2O = a 1-acyl-sn-glycero-3-phosphocholine + a fatty acid + H(+). In terms of biological role, PLA2 catalyzes the calcium-dependent hydrolysis of the 2-acyl groups in 3-sn-phosphoglycerides. This chain is Basic phospholipase A2 PA-12A, found in Pseudechis australis (Mulga snake).